Reading from the N-terminus, the 295-residue chain is ATP synthase gamma chain (295 aa).

Belongs to the ATPase gamma chain family. As to quaternary structure, F-type ATPases have 2 components, CF(1) - the catalytic core - and CF(0) - the membrane proton channel. CF(1) has five subunits: alpha(3), beta(3), gamma(1), delta(1), epsilon(1). CF(0) has three main subunits: a, b and c.

It is found in the cell inner membrane. Produces ATP from ADP in the presence of a proton gradient across the membrane. The gamma chain is believed to be important in regulating ATPase activity and the flow of protons through the CF(0) complex. This is ATP synthase gamma chain from Cytophaga hutchinsonii (strain ATCC 33406 / DSM 1761 / CIP 103989 / NBRC 15051 / NCIMB 9469 / D465).